The sequence spans 360 residues: Glutaminyl-peptide cyclotransferase (360 aa).

The N-terminal stretch at 1–23 is a signal peptide; that stretch reads MKYLKILIIVTIFFFLLINVINC. N135 carries an N-linked (GlcNAc...) asparagine glycan. D165 provides a ligand contact to Zn(2+). The active-site Proton acceptor is the E199. E200 is a binding site for Zn(2+). Catalysis depends on D251, which acts as the Proton acceptor. H330 is a Zn(2+) binding site.

The protein belongs to the glutaminyl-peptide cyclotransferase family.

Its subcellular location is the secreted. The catalysed reaction is N-terminal L-glutaminyl-[peptide] = N-terminal 5-oxo-L-prolyl-[peptide] + NH4(+). Its function is as follows. Responsible for the biosynthesis of pyroglutamyl peptides. Has a bias against acidic and tryptophan residues adjacent to the N-terminal glutaminyl residue and a lack of importance of chain length after the second residue. Also catalyzes N-terminal pyroglutamate formation. In Dictyostelium discoideum (Social amoeba), this protein is Glutaminyl-peptide cyclotransferase (qpct).